A 435-amino-acid chain; its full sequence is Transcription factor gkaF (435 aa).

A compositionally biased stretch (basic and acidic residues) spans 1–19 (MGRPQRGDTAKERRERQDK). Disordered regions lie at residues 1 to 40 (MGRPQRGDTAKERRERQDKVTSPPESGPISQSGLSDTVDW), 115 to 158 (STTA…SSQS), and 231 to 257 (FSSESASPHVNRPPIQQQQSPSRFLAP). Residues 28-40 (PISQSGLSDTVDW) are compositionally biased toward polar residues. Residues 143 to 158 (SQSSDSSKPSSTSSQS) show a composition bias toward low complexity.

The protein localises to the nucleus. Its function is as follows. Transcription factor; part of the gene cluster that mediates the biosynthesis of GKK1032, fungal natural products containing a macrocyclic para-cyclophane connected to a decahydrofluorene ring system that show potent antitumor activities. The sequence is that of Transcription factor gkaF from Penicillium citrinum.